Here is a 440-residue protein sequence, read N- to C-terminus: Thymidine phosphorylase (440 aa).

This sequence belongs to the thymidine/pyrimidine-nucleoside phosphorylase family. In terms of assembly, homodimer.

It carries out the reaction thymidine + phosphate = 2-deoxy-alpha-D-ribose 1-phosphate + thymine. It functions in the pathway pyrimidine metabolism; dTMP biosynthesis via salvage pathway; dTMP from thymine: step 1/2. Functionally, the enzymes which catalyze the reversible phosphorolysis of pyrimidine nucleosides are involved in the degradation of these compounds and in their utilization as carbon and energy sources, or in the rescue of pyrimidine bases for nucleotide synthesis. The chain is Thymidine phosphorylase from Cronobacter sakazakii (strain ATCC BAA-894) (Enterobacter sakazakii).